The sequence spans 699 residues: TPR repeat-containing thioredoxin TTL1 (699 aa).

Positions 1–211 (MPKSVKPISE…SSSRSSSTVA (211 aa)) are disordered. Residues 9-20 (SESDKLSDHLRD) show a composition bias toward basic and acidic residues. Phosphoserine is present on residues Ser-39 and Ser-42. Low complexity-rich tracts occupy residues 52–70 (TTTT…SSGS) and 83–135 (RSNS…TSPA). Gly residues predominate over residues 166 to 182 (SGTGTYGHGSIMRGGGI). A compositionally biased stretch (low complexity) spans 195–210 (NSPVNVGSSSRSSSTV). TPR repeat units lie at residues 227-260 (SEEV…SPTN), 262-294 (AYRS…DPNY), 296-328 (RAHH…SDPM), 419-452 (AYIY…DPRC), 465-498 (VARA…DPCN), 499-532 (AILY…QPSY), and 534-566 (KPLL…LPHD). Residues 605–691 (QFKSAMNLPG…IVCPSKEVLE (87 aa)) enclose the Thioredoxin domain.

In terms of tissue distribution, expressed in the root elongation zone, stele, root cap, embryo vascular system, leaf axilar buds, silique abscission zone and guard cells.

Involved in responses to osmotic stress and abscisic acid (ABA). May act as a positive regulator of ABA signaling during germination and seedling development under stress. This Arabidopsis thaliana (Mouse-ear cress) protein is TPR repeat-containing thioredoxin TTL1 (TTL1).